We begin with the raw amino-acid sequence, 305 residues long: tRNA dimethylallyltransferase 2 (305 aa).

14–21 (GPTASGKT) contributes to the ATP binding site. Substrate is bound at residue 16–21 (TASGKT). Residues 39–42 (DSRQ) are interaction with substrate tRNA.

This sequence belongs to the IPP transferase family. Monomer. Mg(2+) is required as a cofactor.

The enzyme catalyses adenosine(37) in tRNA + dimethylallyl diphosphate = N(6)-dimethylallyladenosine(37) in tRNA + diphosphate. Its function is as follows. Catalyzes the transfer of a dimethylallyl group onto the adenine at position 37 in tRNAs that read codons beginning with uridine, leading to the formation of N6-(dimethylallyl)adenosine (i(6)A). The chain is tRNA dimethylallyltransferase 2 from Trichlorobacter lovleyi (strain ATCC BAA-1151 / DSM 17278 / SZ) (Geobacter lovleyi).